Reading from the N-terminus, the 298-residue chain is MTDLHTDVERYLRYLSVERQLSPITLLNYQRQLEAIINFASENGLQNWQQCDAAMVRNFAVRSRRKGLGAASLALRLSALRSFFDWLVSQNELKANPAKGVSAPKTPRHLPKNIDVDDINRLLDIDINDPLAVRDRAMLEVMYGAGLRLSELVGLDIKHLDLESGEVWVMGKGSKERRLPIGRNALSWIEHWLDLRDLFGSEDDALFLSKLGKRISARNVQKRFAEWGIKQGLNNHVHPHKLRHSFATHMLESSGDLRGVQELLGHANLSTTQIYTHLDFQHLASVYDAAHPRAKRGK.

Residues 2-88 form the Core-binding (CB) domain; it reads TDLHTDVERY…ALRSFFDWLV (87 aa). The 180-residue stretch at 109-288 folds into the Tyr recombinase domain; sequence HLPKNIDVDD…DFQHLASVYD (180 aa). Catalysis depends on residues R148, K172, H240, R243, and H266. Residue Y275 is the O-(3'-phospho-DNA)-tyrosine intermediate of the active site.

This sequence belongs to the 'phage' integrase family. XerC subfamily. As to quaternary structure, forms a cyclic heterotetrameric complex composed of two molecules of XerC and two molecules of XerD, in which XerC interacts with XerD via its C-terminal region, XerD interacts with XerC via its C-terminal region and so on.

It localises to the cytoplasm. FtsK may regulate the catalytic switch between XerC and XerD in the heterotetrameric complex during the two steps of the recombination process. In terms of biological role, site-specific tyrosine recombinase, which acts by catalyzing the cutting and rejoining of the recombining DNA molecules. Binds cooperatively to specific DNA consensus sequences that are separated from XerD binding sites by a short central region, forming the heterotetrameric XerC-XerD complex that recombines DNA substrates. The complex is essential to convert dimers of the bacterial chromosome into monomers to permit their segregation at cell division. It also contributes to the segregational stability of plasmids. In the complex XerC specifically exchanges the top DNA strands. In Escherichia coli O157:H7, this protein is Tyrosine recombinase XerC.